The following is a 435-amino-acid chain: MARLLTNSQAEELHKSIIAYLSANGLPETTAILRKELGVTEHDFNATAVKKYETLLEKNGPLLFAYRESRDSKAWLPQRPRYSLHSHRDTINCIAFHPKYSSIASGSDDCTIKIWDWELGELEVTLKGHTRAVRDLDYGSPPGAVGVLLASCSSDLTIKLWDPADGYKNIRTLQGHDHIVSAVRFIPNGSLLASASRDMDVRLWDVTNGYCVKTIQGHTGWVRDVCASLDGRFILSTGDDMTVRLWDISAKPENKLTMVGHENFNECCAIAPPTSYQYLAPLARLAKVSRAGSTAEFMATGSRDKTIKLWDARGTCLMTLTGHDNWVRAIVFHPGGRYLLSVSDDKTLRCWDLSQEGKCVKTIRDTHGGFITCLRWAPAILKDTPTDAARALVRQIPDVAEIMKNATFEESFSDVQIRCVVATGSVDKKLQIFAG.

The LisH domain maps to 9–41 (QAEELHKSIIAYLSANGLPETTAILRKELGVTE). 8 WD repeats span residues 86 to 125 (SHRD…LEVT), 128 to 171 (GHTR…KNIR), 175 to 214 (GHDH…CVKT), 217 to 256 (GHTG…ENKL), 280 to 320 (APLA…LMTL), 322 to 361 (GHDN…KCVK), 366 to 396 (THGG…VRQI), and 397 to 434 (PDVA…QIFA).

This sequence belongs to the WD repeat LIS1/nudF family. As to quaternary structure, self-associates. Interacts with nudE and dynein.

The protein resides in the cytoplasm. Its subcellular location is the cytoskeleton. It localises to the spindle pole. Functionally, positively regulates the activity of the minus-end directed microtubule motor protein dynein. May enhance dynein-mediated microtubule sliding by targeting dynein to the microtubule plus end. Required for nuclear migration during vegetative growth as well as development. Required for retrograde early endosome (EE) transport from the hyphal tip. Required for localization of dynein to the mitotic spindle poles. Recruits additional proteins to the dynein complex at SPBs. In Aspergillus clavatus (strain ATCC 1007 / CBS 513.65 / DSM 816 / NCTC 3887 / NRRL 1 / QM 1276 / 107), this protein is Nuclear distribution protein nudF 2.